A 453-amino-acid polypeptide reads, in one-letter code: Bifunctional protein GlmU (453 aa).

The pyrophosphorylase stretch occupies residues 1 to 226 (MKFSTVILAA…SIEVEGVNDR (226 aa)). UDP-N-acetyl-alpha-D-glucosamine is bound by residues 8 to 11 (LAAG), Lys22, Gln73, 78 to 79 (GT), 100 to 102 (YGD), Gly137, Glu151, Asn166, and Asn224. Residue Asp102 participates in Mg(2+) binding. Position 224 (Asn224) interacts with Mg(2+). The interval 227–247 (IQLARLERAFQARQAKKLLEQ) is linker. The tract at residues 248–453 (GVMLRDPARF…AGWQRPAKKK (206 aa)) is N-acetyltransferase. The UDP-N-acetyl-alpha-D-glucosamine site is built by Arg330 and Lys348. Catalysis depends on His360, which acts as the Proton acceptor. Tyr363 and Asn374 together coordinate UDP-N-acetyl-alpha-D-glucosamine. Acetyl-CoA-binding positions include Ala377, 383–384 (NY), Ser402, Ala420, and Arg437.

This sequence in the N-terminal section; belongs to the N-acetylglucosamine-1-phosphate uridyltransferase family. In the C-terminal section; belongs to the transferase hexapeptide repeat family. In terms of assembly, homotrimer. It depends on Mg(2+) as a cofactor.

It localises to the cytoplasm. The catalysed reaction is alpha-D-glucosamine 1-phosphate + acetyl-CoA = N-acetyl-alpha-D-glucosamine 1-phosphate + CoA + H(+). It carries out the reaction N-acetyl-alpha-D-glucosamine 1-phosphate + UTP + H(+) = UDP-N-acetyl-alpha-D-glucosamine + diphosphate. Its pathway is nucleotide-sugar biosynthesis; UDP-N-acetyl-alpha-D-glucosamine biosynthesis; N-acetyl-alpha-D-glucosamine 1-phosphate from alpha-D-glucosamine 6-phosphate (route II): step 2/2. It functions in the pathway nucleotide-sugar biosynthesis; UDP-N-acetyl-alpha-D-glucosamine biosynthesis; UDP-N-acetyl-alpha-D-glucosamine from N-acetyl-alpha-D-glucosamine 1-phosphate: step 1/1. It participates in bacterial outer membrane biogenesis; LPS lipid A biosynthesis. In terms of biological role, catalyzes the last two sequential reactions in the de novo biosynthetic pathway for UDP-N-acetylglucosamine (UDP-GlcNAc). The C-terminal domain catalyzes the transfer of acetyl group from acetyl coenzyme A to glucosamine-1-phosphate (GlcN-1-P) to produce N-acetylglucosamine-1-phosphate (GlcNAc-1-P), which is converted into UDP-GlcNAc by the transfer of uridine 5-monophosphate (from uridine 5-triphosphate), a reaction catalyzed by the N-terminal domain. This is Bifunctional protein GlmU from Vibrio cholerae serotype O1 (strain ATCC 39541 / Classical Ogawa 395 / O395).